Reading from the N-terminus, the 199-residue chain is Calcium-binding protein CAST (199 aa).

Residues 1-13 (MGSVQDENKDEFK) show a composition bias toward basic and acidic residues. The tract at residues 1–31 (MGSVQDENKDEFKQSLTRGKLKPSSSSSFRL) is disordered. EF-hand domains are found at residues 36-71 (LNSI…LGLD), 75-110 (SEIE…VFFG), 125-160 (QDES…LGLP), and 163-198 (SEID…VIVP). Asp-49, Asn-51, Asp-53, and Glu-60 together coordinate Ca(2+). Ca(2+)-binding residues include Asp-138, Asn-140, Asp-142, Glu-149, Asp-178, Asp-180, Arg-182, and Glu-187.

Functionally, not known. Probably binds 3 calcium ions. The chain is Calcium-binding protein CAST from Solanum tuberosum (Potato).